The chain runs to 489 residues: UDP-N-acetylmuramoylalanine--D-glutamate ligase (489 aa).

126–132 (GTNGKTT) provides a ligand contact to ATP.

Belongs to the MurCDEF family.

Its subcellular location is the cytoplasm. It catalyses the reaction UDP-N-acetyl-alpha-D-muramoyl-L-alanine + D-glutamate + ATP = UDP-N-acetyl-alpha-D-muramoyl-L-alanyl-D-glutamate + ADP + phosphate + H(+). It participates in cell wall biogenesis; peptidoglycan biosynthesis. Cell wall formation. Catalyzes the addition of glutamate to the nucleotide precursor UDP-N-acetylmuramoyl-L-alanine (UMA). This is UDP-N-acetylmuramoylalanine--D-glutamate ligase from Mycolicibacterium paratuberculosis (strain ATCC BAA-968 / K-10) (Mycobacterium paratuberculosis).